The primary structure comprises 304 residues: Non-specific ribonucleoside hydrolase RihC (304 aa).

Residue His233 is part of the active site.

This sequence belongs to the IUNH family. RihC subfamily.

Its function is as follows. Hydrolyzes both purine and pyrimidine ribonucleosides with a broad-substrate specificity. This chain is Non-specific ribonucleoside hydrolase RihC, found in Escherichia fergusonii (strain ATCC 35469 / DSM 13698 / CCUG 18766 / IAM 14443 / JCM 21226 / LMG 7866 / NBRC 102419 / NCTC 12128 / CDC 0568-73).